A 239-amino-acid polypeptide reads, in one-letter code: MQKLELLYEGKAKRIYRTEAADMVWVEYKDSATAFNGEKKATITGKGRLNNEITTLLFRKLQEVGIKTHFVEKLSDTEQLVKKVSIIPLEVVTRNVIAGSLSKRLGMEEGTALTTPIVEFYYKDDDLGDPLVTEDHIRLLNVATPEQVSVLRDAALQINQVMIEHFASCRVRLVDFKLEFGVTEEGEIILADEISPDTCRLWDETSNEKFDKDVFRRDLGNLTEAYEEILKRLGGASHV.

Belongs to the SAICAR synthetase family.

It catalyses the reaction 5-amino-1-(5-phospho-D-ribosyl)imidazole-4-carboxylate + L-aspartate + ATP = (2S)-2-[5-amino-1-(5-phospho-beta-D-ribosyl)imidazole-4-carboxamido]succinate + ADP + phosphate + 2 H(+). Its pathway is purine metabolism; IMP biosynthesis via de novo pathway; 5-amino-1-(5-phospho-D-ribosyl)imidazole-4-carboxamide from 5-amino-1-(5-phospho-D-ribosyl)imidazole-4-carboxylate: step 1/2. The sequence is that of Phosphoribosylaminoimidazole-succinocarboxamide synthase from Bacillus mycoides (strain KBAB4) (Bacillus weihenstephanensis).